A 233-amino-acid chain; its full sequence is Orotidine 5'-phosphate decarboxylase (233 aa).

Substrate contacts are provided by residues D9, K31, D58–T67, T120, R182, Q191, G211, and R212. The Proton donor role is filled by K60.

Belongs to the OMP decarboxylase family. Type 1 subfamily. As to quaternary structure, homodimer.

It carries out the reaction orotidine 5'-phosphate + H(+) = UMP + CO2. Its pathway is pyrimidine metabolism; UMP biosynthesis via de novo pathway; UMP from orotate: step 2/2. In terms of biological role, catalyzes the decarboxylation of orotidine 5'-monophosphate (OMP) to uridine 5'-monophosphate (UMP). This Listeria innocua serovar 6a (strain ATCC BAA-680 / CLIP 11262) protein is Orotidine 5'-phosphate decarboxylase.